The chain runs to 338 residues: L-serine dehydratase (338 aa).

Lysine 39 is subject to N6-(pyridoxal phosphate)lysine.

It belongs to the serine/threonine dehydratase family. It depends on pyridoxal 5'-phosphate as a cofactor.

The protein localises to the cytoplasm. The catalysed reaction is L-serine = pyruvate + NH4(+). It participates in carbohydrate biosynthesis; gluconeogenesis. The chain is L-serine dehydratase (SDL1) from Saccharomyces cerevisiae (strain YJM789) (Baker's yeast).